Here is a 187-residue protein sequence, read N- to C-terminus: Fibroblast growth factor 4A (187 aa).

The first 22 residues, 1–22 (MTVPSALVPILLLGTAAVMVQC), serve as a signal peptide directing secretion.

Belongs to the heparin-binding growth factors family.

It localises to the secreted. Functionally, plays an important role in the regulation of embryonic development, cell proliferation, and cell differentiation. Good candidate for an inducing factor with possible roles both in mesoderm induction at the blastula stage and in the formation of the anteroposterior axis at the gastrula stage. The polypeptide is Fibroblast growth factor 4A (fgf4-a) (Xenopus laevis (African clawed frog)).